The primary structure comprises 368 residues: MTSIVLFCRPGFEKECGAEIQEKAAWNEMYGYLELKINQGLVFFHLHESAHGEALMNKLPLKRLIFARQWFVTVTDKIDLPDYNRVEAITEALGNDWQYSDLRMEMADDNDGKSLSKFCRKLSVPLRQALRKNKVLTQKGNNSADDPEGAILHALFLSGQEVILGFSLARNSSPHVMGIPRLKFPSASPSRSTLKLDEAFLHFIPRDEWDERLTSGMNAVDLGSAPGGWTYQLVRRGMMVTAIDNGLMAESLMETGQVKHKMMDGFKYVPLKQNVYWLVCDMIEKPQRVAKLMSEWLLHGHCKEAMFNLKLPMKGRYQQVTNDLQTIKDAFTKHNVKYELYAKHLYYDREEVTVHARLLSPAPLRAKE.

S-adenosyl-L-methionine-binding positions include S192, 225-228 (APGG), D244, D264, and D281. Residue K310 is the Proton acceptor of the active site.

Belongs to the class I-like SAM-binding methyltransferase superfamily. RNA methyltransferase RlmE family. RlmM subfamily. In terms of assembly, monomer.

The protein resides in the cytoplasm. The enzyme catalyses cytidine(2498) in 23S rRNA + S-adenosyl-L-methionine = 2'-O-methylcytidine(2498) in 23S rRNA + S-adenosyl-L-homocysteine + H(+). Catalyzes the 2'-O-methylation at nucleotide C2498 in 23S rRNA. This chain is Ribosomal RNA large subunit methyltransferase M, found in Colwellia psychrerythraea (strain 34H / ATCC BAA-681) (Vibrio psychroerythus).